The chain runs to 263 residues: 3-methyl-2-oxobutanoate hydroxymethyltransferase (263 aa).

Mg(2+) is bound by residues Asp-45 and Asp-84. 3-methyl-2-oxobutanoate is bound by residues 45 to 46 (DS), Asp-84, and Lys-112. Glu-114 contacts Mg(2+). Glu-181 acts as the Proton acceptor in catalysis.

Belongs to the PanB family. As to quaternary structure, homodecamer; pentamer of dimers. It depends on Mg(2+) as a cofactor.

It localises to the cytoplasm. It carries out the reaction 3-methyl-2-oxobutanoate + (6R)-5,10-methylene-5,6,7,8-tetrahydrofolate + H2O = 2-dehydropantoate + (6S)-5,6,7,8-tetrahydrofolate. The protein operates within cofactor biosynthesis; (R)-pantothenate biosynthesis; (R)-pantoate from 3-methyl-2-oxobutanoate: step 1/2. Its function is as follows. Catalyzes the reversible reaction in which hydroxymethyl group from 5,10-methylenetetrahydrofolate is transferred onto alpha-ketoisovalerate to form ketopantoate. This is 3-methyl-2-oxobutanoate hydroxymethyltransferase from Proteus mirabilis (strain HI4320).